We begin with the raw amino-acid sequence, 203 residues long: Molybdenum cofactor guanylyltransferase (203 aa).

GTP contacts are provided by residues 12–14 (LAG), lysine 25, asparagine 53, aspartate 71, and aspartate 101. Aspartate 101 contributes to the Mg(2+) binding site.

The protein belongs to the MobA family. Monomer. Requires Mg(2+) as cofactor.

It localises to the cytoplasm. It catalyses the reaction Mo-molybdopterin + GTP + H(+) = Mo-molybdopterin guanine dinucleotide + diphosphate. Transfers a GMP moiety from GTP to Mo-molybdopterin (Mo-MPT) cofactor (Moco or molybdenum cofactor) to form Mo-molybdopterin guanine dinucleotide (Mo-MGD) cofactor. This is Molybdenum cofactor guanylyltransferase from Methylibium petroleiphilum (strain ATCC BAA-1232 / LMG 22953 / PM1).